Consider the following 55-residue polypeptide: Cytochrome b-c1 complex subunit 9 (55 aa).

Over 1–15 the chain is Mitochondrial matrix; sequence MKVIYNTLFKRTSTY. The helical transmembrane segment at 16–41 threads the bilayer; that stretch reads AVAIIASAFFFERALDVTSVAIFEGI. Topologically, residues 42-55 are chloroplast intermembrane; that stretch reads NKGKLWKDIKGKYE.

This sequence belongs to the UQCR10/QCR9 family. Component of the ubiquinol-cytochrome c oxidoreductase (cytochrome b-c1 complex, complex III, CIII), a multisubunit enzyme composed of 3 respiratory subunits cytochrome b, cytochrome c1 and Rieske protein, 2 core protein subunits, and additional low-molecular weight protein subunits. The complex exists as an obligatory dimer and forms supercomplexes (SCs) in the inner mitochondrial membrane with cytochrome c oxidase (complex IV, CIV).

The protein localises to the mitochondrion inner membrane. Component of the ubiquinol-cytochrome c oxidoreductase, a multisubunit transmembrane complex that is part of the mitochondrial electron transport chain which drives oxidative phosphorylation. The respiratory chain contains 3 multisubunit complexes succinate dehydrogenase (complex II, CII), ubiquinol-cytochrome c oxidoreductase (cytochrome b-c1 complex, complex III, CIII) and cytochrome c oxidase (complex IV, CIV), that cooperate to transfer electrons derived from NADH and succinate to molecular oxygen, creating an electrochemical gradient over the inner membrane that drives transmembrane transport and the ATP synthase. The cytochrome b-c1 complex catalyzes electron transfer from ubiquinol to cytochrome c, linking this redox reaction to translocation of protons across the mitochondrial inner membrane, with protons being carried across the membrane as hydrogens on the quinol. In the process called Q cycle, 2 protons are consumed from the matrix, 4 protons are released into the intermembrane space and 2 electrons are passed to cytochrome c. The chain is Cytochrome b-c1 complex subunit 9 (ox) from Drosophila melanogaster (Fruit fly).